Reading from the N-terminus, the 449-residue chain is Trigger factor (449 aa).

Positions Gly162–Pro242 constitute a PPIase FKBP-type domain. Residues Ala428–Ala449 are disordered. Low complexity predominate over residues Pro438–Ala449.

Belongs to the FKBP-type PPIase family. Tig subfamily.

Its subcellular location is the cytoplasm. The catalysed reaction is [protein]-peptidylproline (omega=180) = [protein]-peptidylproline (omega=0). Its function is as follows. Involved in protein export. Acts as a chaperone by maintaining the newly synthesized protein in an open conformation. Functions as a peptidyl-prolyl cis-trans isomerase. This is Trigger factor from Acidothermus cellulolyticus (strain ATCC 43068 / DSM 8971 / 11B).